Here is a 753-residue protein sequence, read N- to C-terminus: 5-methyltetrahydropteroyltriglutamate--homocysteine methyltransferase (753 aa).

Residues R17–K20 and K117 each bind 5-methyltetrahydropteroyltri-L-glutamate. L-homocysteine-binding positions include I431 to S433 and E484. Residues I431–S433 and E484 each bind L-methionine. 5-methyltetrahydropteroyltri-L-glutamate is bound by residues R515 to C516 and W561. An L-homocysteine-binding site is contributed by D599. Position 599 (D599) interacts with L-methionine. E605 provides a ligand contact to 5-methyltetrahydropteroyltri-L-glutamate. 3 residues coordinate Zn(2+): H641, C643, and E665. Catalysis depends on H694, which acts as the Proton donor. C726 serves as a coordination point for Zn(2+).

This sequence belongs to the vitamin-B12 independent methionine synthase family. Zn(2+) serves as cofactor.

It carries out the reaction 5-methyltetrahydropteroyltri-L-glutamate + L-homocysteine = tetrahydropteroyltri-L-glutamate + L-methionine. Its pathway is amino-acid biosynthesis; L-methionine biosynthesis via de novo pathway; L-methionine from L-homocysteine (MetE route): step 1/1. Catalyzes the transfer of a methyl group from 5-methyltetrahydrofolate to homocysteine resulting in methionine formation. The sequence is that of 5-methyltetrahydropteroyltriglutamate--homocysteine methyltransferase from Escherichia coli (strain UTI89 / UPEC).